Consider the following 267-residue polypeptide: Indole-3-glycerol phosphate synthase (267 aa).

Belongs to the TrpC family.

The enzyme catalyses 1-(2-carboxyphenylamino)-1-deoxy-D-ribulose 5-phosphate + H(+) = (1S,2R)-1-C-(indol-3-yl)glycerol 3-phosphate + CO2 + H2O. It participates in amino-acid biosynthesis; L-tryptophan biosynthesis; L-tryptophan from chorismate: step 4/5. This chain is Indole-3-glycerol phosphate synthase, found in Polynucleobacter asymbioticus (strain DSM 18221 / CIP 109841 / QLW-P1DMWA-1) (Polynucleobacter necessarius subsp. asymbioticus).